The chain runs to 90 residues: Chaplin-G (90 aa).

The first 27 residues, 1–27 (MSRIAKAAGVALGTGAVVLSGTGMAMA), serve as a signal peptide directing secretion. Residues 38 to 78 (SPGVLSGNVVQVPVHVPVNLCGNTIDVIGLLNPAFGNACEN) form the Chaplin domain. Cys-58 and Cys-76 are disulfide-bonded.

It belongs to the chaplin family. Short chaplin subfamily.

Its subcellular location is the cell surface. The protein resides in the secreted. It is found in the cell wall. In terms of biological role, one of 8 partially redundant surface-active proteins required for efficient formation of aerial mycelium; the short chaplins assemble into a hydrophobic, amyloidal fibrillar surface layer that envelopes and protects aerial hyphae and spores, presumably anchored to the long chaplins. Chaplins have an overlapping function with the surface-active SapB peptide; chaplins are essential on minimal medium while on rich medium both chaplins and SapB are required for efficient aerial hyphae formation. Chaplins are also involved in cell attachment to a hydrophobic surface. Forms amyloid fibrils in vitro probably composed of stacked beta-sheets, at low extracellular concentrations individually restores the ability to form aerial hyphae to a chaplin-deficient strain. A small chaplin extract (ChpD, ChpE, ChpF, ChpG and ChpH) self-assembles into 2 different amyloids; small fibrils at the air-water interface form an amphipathic membrane that resembles spore-surface structures involved in aerial hyphae formation, and hydrophilic fibrils in solution that resemble the fibers that attach cells to a hydrophobic surface. At the air-water interface the hydrophilic surface is in contact with water (probably equivalent to the peptidoglycan layer), while the hydrophobic face is exposed to the air, making the surface of the aerial hyphae hydrophobic. A small chaplin extract applied to a chaplin-deficient strain restores aerial hyphae formation. The small chaplin extract forms an amyloid-like structure similar to that seen on the surface of cells without rodlets (rdlA-rdlB deletions), and is highly surface active, reducing surface tension from 72 to 26 mJ/m(2), which probably allows escape of hyphae from an aqueous environment into air. ChpF and ChpG are sufficient to restore the rodlet layer and hydrophobicity to a strain deleted for the other 6 chaplin genes. The protein is Chaplin-G of Streptomyces coelicolor (strain ATCC BAA-471 / A3(2) / M145).